Reading from the N-terminus, the 335-residue chain is MSLSETATQAPQPANVLLEVNDLRVTFATPDGDVTAVNDLNFTLRAGETLGIVGESGSGKSQTAFALMGLLATNGRIGGSATFNGREILNLPERELNTLRAEQISMIFQDPMTSLNPYMRVGEQLMEVLMLHKGMSKAEAFEESVRMLDAVKMPEARKRMKMYPHEFSGGMRQRVMIAMALLCRPKLLIADEPTTALDVTVQAQIMTLLNELKREFNTAIIMITHDLGVVAGICDKVLVMYAGRTMEYGKARDVFYQPVHPYSIGLLNAVPRLDSEGAEMLTIPGNPPNLLRLPKGCPFQPRCPHAMEICNNAPPLEAFSPGRLRACFKPVEELL.

An ABC transporter domain is found at 18–267 (LEVNDLRVTF…PVHPYSIGLL (250 aa)). 54-61 (GESGSGKS) is a binding site for ATP.

It belongs to the ABC transporter superfamily. In terms of assembly, the complex is composed of two ATP-binding proteins (OppD and OppF), two transmembrane proteins (OppB and OppC) and a solute-binding protein (OppA).

The protein localises to the cell inner membrane. The catalysed reaction is a [peptide](out) + ATP + H2O = a [peptide](in) + ADP + phosphate + H(+). The enzyme catalyses L-alanyl-gamma-D-glutamyl-meso-2,6-diaminopimelate(out) + ATP + H2O = L-alanyl-gamma-D-glutamyl-meso-2,6-diaminopimelate(in) + ADP + phosphate + H(+). Part of the ABC transporter complex OppABCDF involved in the uptake of oligopeptides, including the cell wall murein tripeptide L-alanyl-gamma-D-glutamyl-meso-diaminopimelate. Responsible for energy coupling to the transport system. Plays an important nutritional role and is involved in the recycling of cell wall peptides. Binds ATP. The protein is Oligopeptide transport ATP-binding protein OppD of Salmonella typhimurium (strain LT2 / SGSC1412 / ATCC 700720).